Here is a 128-residue protein sequence, read N- to C-terminus: 3-aminoacrylate deaminase RutC (128 aa).

This sequence belongs to the RutC family.

It carries out the reaction (Z)-3-aminoacrylate + H2O + H(+) = 3-oxopropanoate + NH4(+). Involved in pyrimidine catabolism. Catalyzes the deamination of 3-aminoacrylate to malonic semialdehyde, a reaction that can also occur spontaneously. RutC may facilitate the reaction and modulate the metabolic fitness, rather than catalyzing essential functions. In Enterobacter sp. (strain 638), this protein is 3-aminoacrylate deaminase RutC.